Reading from the N-terminus, the 180-residue chain is dCTP deaminase, dUMP-forming (180 aa).

DCTP is bound by residues Arg96 to Arg101, Asp113, Thr121 to Glu123, Gln142, Tyr156, and Gln163. Glu123 functions as the Proton donor/acceptor in the catalytic mechanism.

Belongs to the dCTP deaminase family. As to quaternary structure, homotrimer.

The enzyme catalyses dCTP + 2 H2O = dUMP + NH4(+) + diphosphate. The protein operates within pyrimidine metabolism; dUMP biosynthesis; dUMP from dCTP: step 1/1. Bifunctional enzyme that catalyzes both the deamination of dCTP to dUTP and the hydrolysis of dUTP to dUMP without releasing the toxic dUTP intermediate. The sequence is that of dCTP deaminase, dUMP-forming from Aquifex aeolicus (strain VF5).